The chain runs to 882 residues: Liprin-beta-2 (882 aa).

Residues 101 to 303 (AASNETYQER…DKDRRIEELT (203 aa)) adopt a coiled-coil conformation. Phosphoserine is present on residues Ser328, Ser362, and Ser386. Residues 339 to 554 (RKWNTTNKSP…SRTRDTKGQK (216 aa)) are disordered. Over residues 388 to 399 (EDLRRESGDKCV) the composition is skewed to basic and acidic residues. Composition is skewed to polar residues over residues 442-457 (PTAS…SQPK) and 481-495 (SSAS…QSPV). Phosphoserine is present on residues Ser502 and Ser518. The segment covering 502–515 (SPKGIKKFWGKIRR) has biased composition (basic residues). 3 consecutive SAM domains span residues 564–628 (WSTE…INAK), 636–699 (LDHI…LHVN), and 724–789 (WSNH…KFNA).

The protein belongs to the liprin family. Liprin-beta subfamily. As to quaternary structure, forms homodimers and heterodimers. As to expression, expressed widely. Strong expression in liver, kidney, intestine, heart, lung and testis. Low expression in brain and thymus.

Functionally, may regulate the disassembly of focal adhesions. Did not bind receptor-like tyrosine phosphatases type 2A. This Mus musculus (Mouse) protein is Liprin-beta-2 (Ppfibp2).